We begin with the raw amino-acid sequence, 265 residues long: Bidirectional sugar transporter NEC1 (265 aa).

At 1-8 the chain is on the extracellular side; it reads MAQLRADD. Residues 9–29 form a helical membrane-spanning segment; that stretch reads LSFIFGLLGNIVSFMVFLAPV. The MtN3/slv 1 domain occupies 11-97; it reads FIFGLLGNIV…SLFLFYAPRK (87 aa). Over 30-44 the chain is Cytoplasmic; sequence PTFYKIYKRKSSEGY. Residues 45-65 form a helical membrane-spanning segment; sequence QAIPYMVALFSAGLLLYYAYL. Over 66-71 the chain is Extracellular; sequence RKNAYL. Residues 72-92 traverse the membrane as a helical segment; it reads IVSINGFGCAIELTYISLFLF. Over 93-103 the chain is Cytoplasmic; that stretch reads YAPRKSKIFTG. A helical membrane pass occupies residues 104-124; that stretch reads WLMLLELGALGMVMPITYLLA. At 125–130 the chain is on the extracellular side; it reads EGSHRV. The chain crosses the membrane as a helical span at residues 131 to 151; the sequence is MIVGWICAAINVAVFAAPLSI. The region spanning 132–216 is the MtN3/slv 2 domain; it reads IVGWICAAIN…LLYFVYKDSK (85 aa). The Cytoplasmic portion of the chain corresponds to 152–164; it reads MRQVIKTKSVEFM. A helical membrane pass occupies residues 165-185; it reads PFTLSLFLTLCATMWFFYGFF. Residues 186 to 190 lie on the Extracellular side of the membrane; that stretch reads KKDFY. The helical transmembrane segment at 191-211 threads the bilayer; that stretch reads IAFPNILGFLFGIVQMLLYFV. The Cytoplasmic segment spans residues 212 to 265; that stretch reads YKDSKRIDDEKSDPVREATKSKEGVEIIINIEDDNSDNALQSMEKDFSRLRTSK.

This sequence belongs to the SWEET sugar transporter family. In terms of assembly, forms homooligomers and/or heterooligomers. As to expression, highly expressed in nectary tissue and weakly in the stamen, especially in stomium cells and in the upper part of the filaments.

The protein resides in the cell membrane. Functionally, mediates both low-affinity uptake and efflux of sugar across the plasma membrane. Promotes the formation of phloem bundles in mid-veins. Probably involved in the development of stomium cells that control anther opening time. Required for pollen viability. This Petunia hybrida (Petunia) protein is Bidirectional sugar transporter NEC1 (NEC1).